The following is a 152-amino-acid chain: MEAQHLHAKPHAEGEWSTGFCDCFSDCKNCCITFWCPCITFGQVAEIVDRGSTSCGTAGALYALIAVVTGCACIYSCFYRGKMRAQYNIKGDDCTDCLKHFCCELCSLTQQYRELKHRGYDMSLGWAGNVERQQNQGGVAMGAPVFQGGMTR.

The helical transmembrane segment at 57–79 threads the bilayer; the sequence is TAGALYALIAVVTGCACIYSCFY.

Belongs to the cornifelin family. As to quaternary structure, homooligomer. In terms of tissue distribution, expressed in roots, leaves, shoots, stems, flowers and siliques. In leaves, restricted mainly to the vascular tissue. Expressed in all cells in the root tip, in the vascular tissue and the epidermis in the elongation zone, and only in the epidermal cells in the root hair zone.

The protein localises to the cell membrane. Functionally, zinc transporter acting in both zinc extrusion and long-distance zinc transport. Involved in the loading of zinc into the xyleme and in the detoxification of excess zinc at the epidermal cells. Acts independently from the zinc transporters HMA2 and HMA4. May be also involved in cadmium resistance. The chain is Protein PLANT CADMIUM RESISTANCE 2 (PCR2) from Arabidopsis thaliana (Mouse-ear cress).